The following is a 235-amino-acid chain: 5'-methylthioadenosine/S-adenosylhomocysteine nucleosidase (235 aa).

Glu-12 functions as the Proton acceptor in the catalytic mechanism. Residues Gly-78, Met-153, and 174-175 contribute to the substrate site; that span reads ME. Asp-198 serves as the catalytic Proton donor.

The protein belongs to the PNP/UDP phosphorylase family. MtnN subfamily.

It catalyses the reaction S-adenosyl-L-homocysteine + H2O = S-(5-deoxy-D-ribos-5-yl)-L-homocysteine + adenine. It carries out the reaction S-methyl-5'-thioadenosine + H2O = 5-(methylsulfanyl)-D-ribose + adenine. The catalysed reaction is 5'-deoxyadenosine + H2O = 5-deoxy-D-ribose + adenine. Its pathway is amino-acid biosynthesis; L-methionine biosynthesis via salvage pathway; S-methyl-5-thio-alpha-D-ribose 1-phosphate from S-methyl-5'-thioadenosine (hydrolase route): step 1/2. In terms of biological role, catalyzes the irreversible cleavage of the glycosidic bond in both 5'-methylthioadenosine (MTA) and S-adenosylhomocysteine (SAH/AdoHcy) to adenine and the corresponding thioribose, 5'-methylthioribose and S-ribosylhomocysteine, respectively. Also cleaves 5'-deoxyadenosine, a toxic by-product of radical S-adenosylmethionine (SAM) enzymes, into 5-deoxyribose and adenine. The polypeptide is 5'-methylthioadenosine/S-adenosylhomocysteine nucleosidase (Geobacillus kaustophilus (strain HTA426)).